Here is a 310-residue protein sequence, read N- to C-terminus: Putative HTH-type transcriptional regulatory protein SSO0942 (310 aa).

Positions 125–180 (LKHKREEMGYSIGDVAKFLGVSRKAIYDYEKGDSDVSLEVAEKLIDLFGDDIIGDV) constitute an HTH cro/C1-type domain. Positions 136 to 155 (IGDVAKFLGVSRKAIYDYEK) form a DNA-binding region, H-T-H motif.

This chain is Putative HTH-type transcriptional regulatory protein SSO0942, found in Saccharolobus solfataricus (strain ATCC 35092 / DSM 1617 / JCM 11322 / P2) (Sulfolobus solfataricus).